Reading from the N-terminus, the 46-residue chain is Esculentin-1 (46 aa).

A disulfide bond links Cys-40 and Cys-46.

In terms of tissue distribution, expressed by the skin glands.

The protein resides in the secreted. In terms of biological role, antimicrobial peptide. Stimulates insulin release by BRIN-BD11 cells in vitro. This Pelophylax saharicus (Sahara frog) protein is Esculentin-1.